Here is a 501-residue protein sequence, read N- to C-terminus: Beta-glucosidase 25 (501 aa).

Residues 1–19 form the signal peptide; that stretch reads MSLLTLVHILVSFSACVEA. A beta-D-glucoside is bound at residue glutamine 39. N-linked (GlcNAc...) asparagine glycosylation occurs at asparagine 107. A beta-D-glucoside contacts are provided by residues histidine 140 and 185-186; that span reads NE. Catalysis depends on glutamate 186, which acts as the Proton donor. Cysteines 205 and 213 form a disulfide. A beta-D-glucoside contacts are provided by residues tyrosine 329, glutamate 402, tryptophan 452, 459 to 460, and phenylalanine 468; that span reads EW. The active-site Nucleophile is the glutamate 402. The N-linked (GlcNAc...) asparagine glycan is linked to asparagine 478.

This sequence belongs to the glycosyl hydrolase 1 family.

The catalysed reaction is Hydrolysis of terminal, non-reducing beta-D-glucosyl residues with release of beta-D-glucose.. This is Beta-glucosidase 25 (BGLU25) from Oryza sativa subsp. japonica (Rice).